A 137-amino-acid chain; its full sequence is Small ribosomal subunit protein uS11 (137 aa).

The segment at 116–137 is disordered; that stretch reads EDVTPIPHDGTRPKGGRRGRRV.

This sequence belongs to the universal ribosomal protein uS11 family. As to quaternary structure, part of the 30S ribosomal subunit.

Located on the platform of the 30S subunit. The sequence is that of Small ribosomal subunit protein uS11 from Pyrococcus furiosus (strain ATCC 43587 / DSM 3638 / JCM 8422 / Vc1).